Consider the following 246-residue polypeptide: MGDREQLLQRARLAEQAERYDDMASAMKAVTELNEPLSNEDRNLLSVAYKNVVGARRSSWRVISSIEQKTMADGNEKKLEKVKAYREKIEKELETVCNDVLALLDKFLIKNCNDFQYESKVFYLKMKGDYYRYLAEVASGEKKNSVVEASEAAYKEAFEISKEHMQPTHPIRLGLALNFSVFYYEIQNAPEQACLLAKQAFDDAIAELDTLNEDSYKDSTLIMQLLRDNLTLWTSDQQDEEAGEGN.

G2 is subject to N-acetylglycine. Phosphoserine occurs at positions 25 and 59.

This sequence belongs to the 14-3-3 family. In terms of assembly, homodimer. Interacts with many nuclear hormone receptors and cofactors including AR, ESR1, ESR2, MC2R, NR3C1, NRIP1, PPARBP and THRA. Interacts with ABL1 (phosphorylated form); the interaction retains it in the cytoplasm. Weakly interacts with CDKN1B. Interacts with ARHGEF28 and CDK16. Interacts with GAB2. Interacts with KCNK18 in a phosphorylation-dependent manner. Interacts with SAMSN1. Interacts with the 'Ser-241' phosphorylated form of PDPK1. Interacts with the 'Thr-369' phosphorylated form of DAPK2. Interacts with PI4KB, TBC1D22A and TBC1D22B. Interacts with SLITRK1. Interacts with MEFV. In terms of processing, phosphorylated on Ser-59 by protein kinase C delta type catalytic subunit in a sphingosine-dependent fashion.

Its subcellular location is the cytoplasm. Its function is as follows. Adapter protein implicated in the regulation of a large spectrum of both general and specialized signaling pathways. Binds to a large number of partners, usually by recognition of a phosphoserine or phosphothreonine motif. Binding generally results in the modulation of the activity of the binding partner. Negatively regulates the kinase activity of PDPK1. The polypeptide is 14-3-3 protein eta (YWHAH) (Bos taurus (Bovine)).